We begin with the raw amino-acid sequence, 216 residues long: Protein-methionine-sulfoxide reductase heme-binding subunit MsrQ (216 aa).

The next 5 helical transmembrane spans lie at 16–36, 48–68, 82–102, 119–139, and 155–175; these read IWAL…LGAT, EHLL…ITPI, ALGL…MVLD, FITI…TSNI, and LVYV…KVVG.

The protein belongs to the MsrQ family. Heterodimer of a catalytic subunit (MsrP) and a heme-binding subunit (MsrQ). FMN serves as cofactor. Requires heme b as cofactor.

It localises to the cell inner membrane. Its function is as follows. Part of the MsrPQ system that repairs oxidized periplasmic proteins containing methionine sulfoxide residues (Met-O), using respiratory chain electrons. Thus protects these proteins from oxidative-stress damage caused by reactive species of oxygen and chlorine generated by the host defense mechanisms. MsrPQ is essential for the maintenance of envelope integrity under bleach stress, rescuing a wide series of structurally unrelated periplasmic proteins from methionine oxidation. MsrQ provides electrons for reduction to the reductase catalytic subunit MsrP, using the quinone pool of the respiratory chain. The chain is Protein-methionine-sulfoxide reductase heme-binding subunit MsrQ from Rhizobium meliloti (strain 1021) (Ensifer meliloti).